The primary structure comprises 80 residues: UPF0512 protein J (80 aa).

The protein belongs to the UPF0512 family.

The polypeptide is UPF0512 protein J (Dictyostelium discoideum (Social amoeba)).